The primary structure comprises 295 residues: Probable ketoamine kinase slr1563 (295 aa).

99–101 (EWL) contributes to the ATP binding site. D201 acts as the Proton acceptor in catalysis.

The protein belongs to the fructosamine kinase family.

Its function is as follows. Ketoamine kinase that phosphorylates ketoamines on the third carbon of the sugar moiety to generate ketoamine 3-phosphate. The chain is Probable ketoamine kinase slr1563 from Synechocystis sp. (strain ATCC 27184 / PCC 6803 / Kazusa).